The chain runs to 854 residues: Fibronectin-binding protein PlpA (854 aa).

Low complexity predominate over residues 1-24 (MDNNQNNFNQPGQQGFDQYQQQSG). A disordered region spans residues 1 to 33 (MDNNQNNFNQPGQQGFDQYQQQSGALVSYGYDA). Residues 91–109 (QYNQQQNQGYEQQYDEYGN) form a fibronectin-binding region. Disordered regions lie at residues 247 to 327 (YEQE…LEAP), 411 to 434 (SSNN…EDSN), 743 to 766 (TINP…QLPP), and 835 to 854 (IQPS…YNNR). Positions 258–267 (EPAHEQDLRE) are enriched in basic and acidic residues. Composition is skewed to polar residues over residues 311-320 (TVNQPDQTPI) and 411-428 (SSNN…TSNE). Residues 384 to 622 (NLEEIQKVKL…SSFQKALSEV (239 aa)) are a coiled coil. Pro residues predominate over residues 746–764 (PPQPQPQALPQPHPQPQQL).

It is found in the cell membrane. In terms of biological role, binds immobilized fibronectin, specifically the gelatin/heparin-binding domain. In Mycoplasmoides gallisepticum (strain R(low / passage 15 / clone 2)) (Mycoplasma gallisepticum), this protein is Fibronectin-binding protein PlpA (plpA).